Consider the following 313-residue polypeptide: Homoserine O-succinyltransferase (313 aa).

Catalysis depends on cysteine 142, which acts as the Acyl-thioester intermediate. Residues lysine 163 and serine 192 each contribute to the substrate site. Histidine 235 serves as the catalytic Proton acceptor. The active site involves glutamate 237. Residue arginine 249 coordinates substrate.

This sequence belongs to the MetA family.

It localises to the cytoplasm. It carries out the reaction L-homoserine + succinyl-CoA = O-succinyl-L-homoserine + CoA. The protein operates within amino-acid biosynthesis; L-methionine biosynthesis via de novo pathway; O-succinyl-L-homoserine from L-homoserine: step 1/1. In terms of biological role, transfers a succinyl group from succinyl-CoA to L-homoserine, forming succinyl-L-homoserine. This chain is Homoserine O-succinyltransferase, found in Vibrio vulnificus (strain YJ016).